The primary structure comprises 250 residues: NADH-quinone oxidoreductase subunit C (250 aa).

This sequence belongs to the complex I 30 kDa subunit family. As to quaternary structure, NDH-1 is composed of 14 different subunits. Subunits NuoB, C, D, E, F, and G constitute the peripheral sector of the complex.

It localises to the cell inner membrane. The enzyme catalyses a quinone + NADH + 5 H(+)(in) = a quinol + NAD(+) + 4 H(+)(out). Functionally, NDH-1 shuttles electrons from NADH, via FMN and iron-sulfur (Fe-S) centers, to quinones in the respiratory chain. The immediate electron acceptor for the enzyme in this species is believed to be ubiquinone. Couples the redox reaction to proton translocation (for every two electrons transferred, four hydrogen ions are translocated across the cytoplasmic membrane), and thus conserves the redox energy in a proton gradient. The polypeptide is NADH-quinone oxidoreductase subunit C (Xanthomonas oryzae pv. oryzae (strain PXO99A)).